Here is a 488-residue protein sequence, read N- to C-terminus: Glutamate--tRNA ligase (488 aa).

The 'HIGH' region motif lies at 16-26 (PSPTGEPHVGT). The 'KMSKS' region signature appears at 257-261 (KLSKR). An ATP-binding site is contributed by lysine 260.

Belongs to the class-I aminoacyl-tRNA synthetase family. Glutamate--tRNA ligase type 1 subfamily. Monomer.

The protein resides in the cytoplasm. The catalysed reaction is tRNA(Glu) + L-glutamate + ATP = L-glutamyl-tRNA(Glu) + AMP + diphosphate. In terms of biological role, catalyzes the attachment of glutamate to tRNA(Glu) in a two-step reaction: glutamate is first activated by ATP to form Glu-AMP and then transferred to the acceptor end of tRNA(Glu). The protein is Glutamate--tRNA ligase of Rhizobium etli (strain ATCC 51251 / DSM 11541 / JCM 21823 / NBRC 15573 / CFN 42).